A 1205-amino-acid polypeptide reads, in one-letter code: Caskin-2 (1205 aa).

ANK repeat units follow at residues 48-77, 81-110, 114-143, 147-176, 188-217, and 220-249; these read DGFSALHHAALSGNSELLLLLLEMQASVDI, NGMRPLHYAAWQGQPEPVRLLLRASASVNA, DGQIPLHLAAQYGHYEVSETLLQHQSNPCH, GKKTPLDLACEFGRVKVVQLLLNSHLCVSL, NFTTPLHLAAKNGHLEVIRLLLKLGIEINK, and KMGTALHEAALCGKTEVVKLLIENGVDVNI. In terms of domain architecture, SH3 spans 281–347; that stretch reads SGILKVRALK…PPSIVEVISK (67 aa). Composition is skewed to polar residues over residues 377-388 and 398-411; these read SPGSQLGINPDT and GSESSVRSAGSGQS. The segment at 377 to 411 is disordered; it reads SPGSQLGINPDTSVAGDRHSVGSESSVRSAGSGQS. SAM domains are found at residues 468 to 531 and 537 to 601; these read KDAE…LIVA and QIPV…LLDL. Over residues 666-687 the composition is skewed to low complexity; sequence RRSFSQESISSRSQGSGHSQES. 4 disordered regions span residues 666–689, 784–964, 984–1054, and 1132–1155; these read RRSFSQESISSRSQGSGHSQESAS, RPGR…QRHL, QIAA…SQEP, and SEASSREQTCIPQQSISNSDKGPP. The span at 823–840 shows a compositional bias: polar residues; the sequence is SSMSSAEGQSPEGQSSVK. Over residues 908–919 the composition is skewed to low complexity; the sequence is ISSQHSSSESIP. The span at 942 to 959 shows a compositional bias: polar residues; that stretch reads DATSELSPTQESQLQSAE. Residues 1009-1037 show a composition bias toward basic and acidic residues; that stretch reads KNEEHDFNLTESDTVKRRPKVKEKEEESP. 2 stretches are compositionally biased toward polar residues: residues 1042–1054 and 1137–1155; these read ANNSPSLIPSQEP and REQTCIPQQSISNSDKGPP.

The polypeptide is Caskin-2 (caskin2) (Xenopus laevis (African clawed frog)).